The sequence spans 391 residues: Phosphatidate cytidylyltransferase 4, chloroplastic (391 aa).

Residues 1–61 constitute a chloroplast transit peptide; it reads MATFAELVLS…SVSRRFLTAV (61 aa). 6 consecutive transmembrane segments (helical) span residues 102–122, 175–195, 202–222, 254–274, 298–318, and 321–341; these read IFGIGIGLPVGCVVLAGGWVF, FGNIDILVTSAAFVVAIALLV, FAQLSSTMFGLFYCGYLPSFW, VGLVATLISFSGVIATDTFAF, IVGLVGCIAITILLSKYLSWP, and LFSSVAFGFLNFFGSVFGDLT.

Belongs to the CDS family. Requires Mg(2+) as cofactor.

The protein resides in the plastid. Its subcellular location is the chloroplast membrane. It catalyses the reaction a 1,2-diacyl-sn-glycero-3-phosphate + CTP + H(+) = a CDP-1,2-diacyl-sn-glycerol + diphosphate. Its pathway is phospholipid metabolism; CDP-diacylglycerol biosynthesis; CDP-diacylglycerol from sn-glycerol 3-phosphate: step 3/3. Highest activities is obtained at about 30 mM CTP and 2 mM phosphatidic acid (PA). In terms of biological role, may be involved in the synthesis of minor phospholipids and in modulation of IP3-mediated signal transduction. Promotes the biosynthesis of plastidial phosphatidylglycerol (PG) which is required for structure and function of thylakoid membranes and, hence, for photoautotrophic growth. This is Phosphatidate cytidylyltransferase 4, chloroplastic from Arabidopsis thaliana (Mouse-ear cress).